Consider the following 394-residue polypeptide: Glycerol-1-phosphate dehydrogenase [NAD(P)+] (394 aa).

NAD(+) is bound by residues Asp54, 116 to 120, and 138 to 141; these read GTIHD and TAPS. Asp143 provides a ligand contact to substrate. Ser147 is an NAD(+) binding site. Asp190 is a substrate binding site. Ni(2+) is bound by residues Asp190 and His270. His274 is a substrate binding site. Residue His290 participates in Ni(2+) binding.

This sequence belongs to the glycerol-1-phosphate dehydrogenase family. In terms of assembly, homodimer. Ni(2+) serves as cofactor.

The protein resides in the cytoplasm. It carries out the reaction sn-glycerol 1-phosphate + NAD(+) = dihydroxyacetone phosphate + NADH + H(+). It catalyses the reaction sn-glycerol 1-phosphate + NADP(+) = dihydroxyacetone phosphate + NADPH + H(+). Catalyzes the NAD(P)H-dependent reduction of dihydroxyacetonephosphate (DHAP or glycerone phosphate) to glycerol 1-phosphate (G1P). The G1P thus generated is probably used for the synthesis of phosphoglycerolipids in Gram-positive bacterial species. This chain is Glycerol-1-phosphate dehydrogenase [NAD(P)+], found in Bacillus velezensis (strain DSM 23117 / BGSC 10A6 / LMG 26770 / FZB42) (Bacillus amyloliquefaciens subsp. plantarum).